Reading from the N-terminus, the 543-residue chain is MKLLTTGLLASAALVAAQEQQVLRADEVFGKAPLPDASIFDETIKQFQSSIEDGISHFWSEMKTNFKDYLPMISLPKKHNRRPDSEWDHVVRGADVESVWVQGADGEKRREIDGKLKNYDLRVKSVDPSQLGIDPGVKQYSGYLDDNDADKHLFYWFFESRNDPKNDPVVLWLNGGPGCSSLTGLFLELGPATIDKNLKVVHNPYSWNSNASVIFLDQPVNVGFSYSGSSVSDTVAAGKDVYALLTLFFKQFPEYATQDFHISGESYAGHYIPVFAAEILSHKNTNINLKSALIGNGLTDPLTQYPHYRPMACGDGGYPAVLDQGTCRSMDNSLERCLSLIETCYSSESAWVCVPAAMYCNSAILAPYQQTGMNPYDVRSKCEDMGSLCYPQLNAITEWLNQKSVMKALGVEVESYESCNSGINRDFLFHGDWMKPFHRLVPSVLEKIPVLIYAGDADFICNWLGNQAWTEALEWPGHKKFTEAKLQDLKIVDNKNKGKKIGQVKSSGNFTFMRIFGAGHMVPLNQPEASLEFFNRWLRGEWH.

The signal sequence occupies residues methionine 1 to alanine 17. The propeptide occupies glutamine 18 to lysine 124. 5 disulfides stabilise this stretch: cysteine 179–cysteine 419, cysteine 313–cysteine 327, cysteine 337–cysteine 360, cysteine 344–cysteine 353, and cysteine 382–cysteine 389. Asparagine 210 carries an N-linked (GlcNAc...) asparagine glycan. The active site involves serine 266. Aspartate 458 is a catalytic residue. The N-linked (GlcNAc...) asparagine glycan is linked to asparagine 509. Histidine 520 is an active-site residue.

Belongs to the peptidase S10 family.

The protein resides in the vacuole. The catalysed reaction is Release of a C-terminal amino acid with broad specificity.. Functionally, vacuolar carboxypeptidase involved in degradation of small peptides. Digests preferentially peptides containing an aliphatic or hydrophobic residue in P1' position, as well as methionine, leucine or phenylalanine in P1 position of ester substrate. The protein is Carboxypeptidase Y homolog A (CPYA) of Arthroderma gypseum (strain ATCC MYA-4604 / CBS 118893) (Microsporum gypseum).